Consider the following 120-residue polypeptide: DNA-binding protein HQ_1105A (120 aa).

Positions 1-55 (MSETPDDLDELRQQRMEELRDQADGQQSQTSDNTAAAQEAAREKAEAQQEALLKQ) are disordered. Positions 10 to 23 (ELRQQRMEELRDQA) are enriched in basic and acidic residues. Residues 24 to 34 (DGQQSQTSDNT) are compositionally biased toward polar residues.

It belongs to the PDCD5 family.

In Haloquadratum walsbyi (strain DSM 16790 / HBSQ001), this protein is DNA-binding protein HQ_1105A.